The sequence spans 228 residues: Urease accessory protein UreF (228 aa).

Belongs to the UreF family. In terms of assembly, ureD, UreF and UreG form a complex that acts as a GTP-hydrolysis-dependent molecular chaperone, activating the urease apoprotein by helping to assemble the nickel containing metallocenter of UreC. The UreE protein probably delivers the nickel.

Its subcellular location is the cytoplasm. Required for maturation of urease via the functional incorporation of the urease nickel metallocenter. The protein is Urease accessory protein UreF of Prochlorococcus marinus (strain MIT 9301).